Here is a 148-residue protein sequence, read N- to C-terminus: uncharacterized protein (148 aa).

The helical transmembrane segment at tyrosine 22–valine 40 threads the bilayer. The tract at residues histidine 43–histidine 141 is histidine-rich.

The protein localises to the host membrane. This is an uncharacterized protein from African swine fever virus (strain Badajoz 1971 Vero-adapted) (Ba71V).